Reading from the N-terminus, the 361-residue chain is Spermatogenesis-associated protein 17 (361 aa).

3 consecutive IQ domains span residues 32 to 61 (ENDA…IVTI), 55 to 84 (LNRI…VAYY), and 91 to 120 (YNAM…LKEY).

Its subcellular location is the cytoplasm. The chain is Spermatogenesis-associated protein 17 (SPATA17) from Macaca fascicularis (Crab-eating macaque).